Reading from the N-terminus, the 255-residue chain is 4-hydroxy-tetrahydrodipicolinate reductase (255 aa).

Residues 8–13 (GANGRV), 88–90 (GTT), and 112–115 (ATNM) contribute to the NAD(+) site. H144 serves as the catalytic Proton donor/acceptor. Residue H145 participates in (S)-2,3,4,5-tetrahydrodipicolinate binding. The active-site Proton donor is the K148. Position 154-155 (154-155 (GT)) interacts with (S)-2,3,4,5-tetrahydrodipicolinate.

This sequence belongs to the DapB family.

The protein resides in the cytoplasm. The enzyme catalyses (S)-2,3,4,5-tetrahydrodipicolinate + NAD(+) + H2O = (2S,4S)-4-hydroxy-2,3,4,5-tetrahydrodipicolinate + NADH + H(+). The catalysed reaction is (S)-2,3,4,5-tetrahydrodipicolinate + NADP(+) + H2O = (2S,4S)-4-hydroxy-2,3,4,5-tetrahydrodipicolinate + NADPH + H(+). The protein operates within amino-acid biosynthesis; L-lysine biosynthesis via DAP pathway; (S)-tetrahydrodipicolinate from L-aspartate: step 4/4. Functionally, catalyzes the conversion of 4-hydroxy-tetrahydrodipicolinate (HTPA) to tetrahydrodipicolinate. The protein is 4-hydroxy-tetrahydrodipicolinate reductase of Sulfurimonas denitrificans (strain ATCC 33889 / DSM 1251) (Thiomicrospira denitrificans (strain ATCC 33889 / DSM 1251)).